The sequence spans 263 residues: Phosphoinositide-3-kinase-interacting protein 1 (263 aa).

An N-terminal signal peptide occupies residues 1–21; the sequence is MLLAWVQAFLVSNMLLAEAYG. Over 22–168 the chain is Extracellular; it reads SGGCFWDNGH…NSKEKKDLGT (147 aa). The Kringle domain occupies 24–101; the sequence is GCFWDNGHLY…EKRPCENLSC (78 aa). 3 disulfides stabilise this stretch: cysteine 25/cysteine 101, cysteine 46/cysteine 82, and cysteine 70/cysteine 96. A glycan (N-linked (GlcNAc...) asparagine) is linked at asparagine 98. The helical transmembrane segment at 169–189 threads the bilayer; it reads LGYVLGITMMVIIVAIGAGII. Residues 190–263 lie on the Cytoplasmic side of the membrane; the sequence is LGYSYKRGKD…LMGQAGTPGA (74 aa). Residues 242–251 show a composition bias toward polar residues; it reads QTPVDPQEGS. Positions 242–263 are disordered; that stretch reads QTPVDPQEGSTPLMGQAGTPGA.

Its subcellular location is the cell membrane. Negative regulator of hepatic phosphatidylinositol 3-kinase (PI3K) activity. In Pongo abelii (Sumatran orangutan), this protein is Phosphoinositide-3-kinase-interacting protein 1 (PIK3IP1).